Here is a 28-residue protein sequence, read N- to C-terminus: leu operon leader peptide (28 aa).

In terms of biological role, involved in control of the biosynthesis of leucine. In Salmonella typhi, this protein is leu operon leader peptide (leuL).